The sequence spans 453 residues: GTPase Der (453 aa).

EngA-type G domains follow at residues 3–178 (PKIA…PNNE) and 190–363 (LKLA…LECS). Residues 9-16 (GRPNVGKS), 57-61 (DTGGV), 130-133 (NKVD), 196-203 (GRPNAGKS), 243-247 (DTAGI), and 308-311 (NKTD) each bind GTP. The KH-like domain maps to 364–448 (TRINTGVLNR…PIRIRLRSSH (85 aa)).

Belongs to the TRAFAC class TrmE-Era-EngA-EngB-Septin-like GTPase superfamily. EngA (Der) GTPase family. As to quaternary structure, associates with the 50S ribosomal subunit.

GTPase that plays an essential role in the late steps of ribosome biogenesis. The protein is GTPase Der of Lawsonia intracellularis (strain PHE/MN1-00).